Consider the following 338-residue polypeptide: Cytoskeleton protein RodZ (338 aa).

At 1 to 111 (MNTEASQDQT…LGKKHKKRDG (111 aa)) the chain is on the cytoplasmic side. Residues 19-79 (LRQAREALGL…KLVHLPEDEL (61 aa)) form the HTH cro/C1-type domain. Positions 30-49 (QQMVAERLCLKVSTIRDIEE) form a DNA-binding region, H-T-H motif. A helical; Signal-anchor for type II membrane protein transmembrane segment spans residues 112-132 (WLMSFTWLIVLVVLGLTGAWW). Over 133-338 (WQNHQAQQAE…RVARLTVGVE (206 aa)) the chain is Periplasmic. Polar residues-rich tracts occupy residues 151 to 163 (SAQL…QSVP) and 180 to 195 (PVAN…NGTV). The interval 151-253 (SAQLSQNGGQ…LPTADAGVTG (103 aa)) is disordered. The span at 196–209 (PATSSAAPADTANN) shows a compositional bias: low complexity. Residues 210 to 241 (GVNTTAPQGTTSAESAVVSPSQAPLPSVSTAQ) are compositionally biased toward polar residues.

Belongs to the RodZ family.

It is found in the cell inner membrane. In terms of biological role, cytoskeletal protein that is involved in cell-shape control through regulation of the length of the long axis. The protein is Cytoskeleton protein RodZ of Yersinia enterocolitica serotype O:8 / biotype 1B (strain NCTC 13174 / 8081).